Here is a 1025-residue protein sequence, read N- to C-terminus: MAPVLSKDVADIESILALNPRTQSRATLRSTLAKKLDKKHWKRNPDKNCFNCEKLENNFDDIKHTTLGERGALREAMRCLKCADAPCQKSCPTNLDIKSFITSISNKNYYGAAKMIFSDNPLGLTCGMVCPTSDLCVGGCNLYATEEGPINIGGLQQYATEVFKAMNIPQIRNPSLPPPEKMPEAYSAKIALLGAGPASISCASFLARLGYNDITIFEKQEYVGGISTSEIPQFRLPYDVVNFEIELMKDLGVKIICGKSLSVNDITLSTLKEEGYKAAFIGIGLPEPKKDHIFQGLTQDQGFYTSKDFLPLVAKSSKAGMCACHSPLLSIRGTVIVLGAGDTAFDCATSALRCGARRVFIVFRKGFVNIRAVPEEVELAREEKCEFLPFLSPRKVIVKGGRIVAMQFVRTEQDETGKWNEDGDQIACLKADVVISAFGSVLSDPKVKEALSPIKFNRWDLPEVDPETMQTSEPWVFAGGDVVGIANTTVEAVNDGKQASWYIHRYIQSQYGASVSAKPELPLFYTPIDLVDISVEMAALKFTNPFGLASATPTTSSSMIRRAFEAGWAFALTKTFSLDKDIVTNVSPRIIRGTTSGPMYGPGQSSFLNIELISEKTAAYWCQSVTELKADFPDNIVIASIMCSYNRNDWMELSRKAEASGADALELNLSCPHGMGERGMGLACGQDPELVRNICRWVRQAVRIPFFAKLTPNVTDIVSIARAAKEGGANGVTATNTVSGLMGLKADGTPWPAVGREKRTTYGGVSGTAIRPIALRAVTTIARALPEFPILATGGIDSAESGLQFLHGGASVLQVCSAIQNQDFTIIQDYCTGLKALLYLKSIEELQDWDGQSPATKSHQKGKPVPCIAELVGKKLPSFGPYLEKCKKIIAEEKLRLKKENVTVLPLERNHFIPKKPIPSVKDVIGKALQYLGTYGELNNTEQVVAVIDEEMCINCGKCYMTCNDSGYQAIQFDPETHLPTVTDTCTGCTLCLSVCPIIDCIKMVSRTTPYEPKRGLPLAVNPVS.

In terms of domain architecture, 4Fe-4S ferredoxin-type 1 spans Glu-69–Phe-100. Positions 79, 82, 87, and 91 each coordinate [4Fe-4S] cluster. Val-129 contacts FAD. Residues Cys-130, Cys-136, Cys-140, and Gln-156 each coordinate [4Fe-4S] cluster. FAD is bound by residues Gly-194 to Ala-198, Glu-218 to Ile-226, Arg-235, and Leu-261. NADP(+)-binding positions include Ala-340 to Thr-343, Arg-364 to Lys-365, and Arg-371. Lys-384 carries the post-translational modification N6-acetyllysine. NADP(+) is bound by residues Ala-437–Gly-439 and Asp-481–Asn-487. FAD is bound at residue Gly-480–Thr-489. FMN contacts are provided by residues Ser-550 and Lys-574 to Thr-575. Substrate contacts are provided by residues Asn-609 and Asn-668–Ser-670. Cys-671 functions as the Proton acceptor in the catalytic mechanism. Lys-709 is an FMN binding site. A substrate-binding site is contributed by Asn-736 to Thr-737. Residues Gly-767, Thr-793–Gly-795, and Cys-816–Ser-817 each bind FMN. 4Fe-4S ferredoxin-type domains are found at residues Val-944 to Glu-976 and His-978 to Arg-1007. Residues Cys-953, Cys-956, Cys-959, Cys-963, Cys-986, Cys-989, Cys-992, and Cys-996 each coordinate [4Fe-4S] cluster.

It belongs to the dihydropyrimidine dehydrogenase family. Homodimer. Requires FAD as cofactor. FMN is required as a cofactor. It depends on [4Fe-4S] cluster as a cofactor.

It localises to the cytoplasm. The enzyme catalyses 5,6-dihydrouracil + NADP(+) = uracil + NADPH + H(+). The catalysed reaction is 5,6-dihydrothymine + NADP(+) = thymine + NADPH + H(+). The protein operates within amino-acid biosynthesis; beta-alanine biosynthesis. Its activity is regulated as follows. Inactivated by 5-iodouracil. Its function is as follows. Involved in pyrimidine base degradation. Catalyzes the reduction of uracil and thymine. Also involved the degradation of the chemotherapeutic drug 5-fluorouracil. In Bos taurus (Bovine), this protein is Dihydropyrimidine dehydrogenase [NADP(+)] (DPYD).